Reading from the N-terminus, the 216-residue chain is Putative flagellar filament outer layer-like protein (216 aa).

Residues 1-22 form a disordered region; sequence MFAQDAAQTGEQTTQNQGENGN. Low complexity predominate over residues 8–22; it reads QTGEQTTQNQGENGN.

The protein resides in the periplasmic flagellum. It is found in the periplasm. Its function is as follows. Might be part of the flagella. This is Putative flagellar filament outer layer-like protein (flaAL) from Brachyspira hyodysenteriae (strain ATCC 49526 / WA1).